The primary structure comprises 273 residues: Petrobactin import ATP-binding protein FpuD (273 aa).

Positions 5-241 constitute an ABC transporter domain; sequence LETKRLTLSY…KLVRDVFRME (237 aa). 37–44 is a binding site for ATP; sequence GSNGCGKS.

The protein belongs to the ABC transporter superfamily. In terms of assembly, the complex is composed of two ATP-binding proteins (FpuD), two transmembrane proteins (FpuB) and a solute-binding protein (FpuA).

The protein localises to the cell membrane. It carries out the reaction a Fe(III)-siderophore(out) + ATP + H2O = a Fe(III)-siderophore(in) + ADP + phosphate + H(+). In terms of biological role, part of an ABC transporter complex involved in ferric-petrobactin uptake. Probably responsible for energy coupling to the transport system. This is Petrobactin import ATP-binding protein FpuD from Bacillus anthracis.